A 417-amino-acid chain; its full sequence is C4-dicarboxylate transport protein (417 aa).

Transmembrane regions (helical) follow at residues 4–26 (IYVQVLIAIVLGVLVGAIWPQIG), 41–60 (KLVIAPVIFCTVAGGIARMG), 72–94 (ALIYFEVVSTLALVIGLVVGRLI), 137–159 (FIGAFADGNLLQVLVIAILTGFA), 180–202 (LFFGIIHIVVRLAPIGAFGAMGF), 217–239 (ALVATFYVTSLLFVLVVLGGIAW), 285–307 (VVGLVIPTGYSFNLDGTNIYMTL), and 347–369 (FITLAATLAVVPDIPIAALAILV).

This sequence belongs to the dicarboxylate/amino acid:cation symporter (DAACS) (TC 2.A.23) family.

The protein localises to the cell inner membrane. In terms of biological role, responsible for the transport of dicarboxylates such as succinate, fumarate, and malate from the periplasm across the membrane. The chain is C4-dicarboxylate transport protein from Caulobacter vibrioides (strain ATCC 19089 / CIP 103742 / CB 15) (Caulobacter crescentus).